A 510-amino-acid chain; its full sequence is GMP synthase [glutamine-hydrolyzing] (510 aa).

The Glutamine amidotransferase type-1 domain maps to 5–194; the sequence is DILVLDFGSQ…FAKICGCEST (190 aa). C82 serves as the catalytic Nucleophile. Active-site residues include H169 and E171. One can recognise a GMPS ATP-PPase domain in the interval 195-385; the sequence is WNMGSFAKKE…LGLSRDIVYR (191 aa). 222-228 serves as a coordination point for ATP; that stretch reads SGGVDSS.

Homodimer.

It carries out the reaction XMP + L-glutamine + ATP + H2O = GMP + L-glutamate + AMP + diphosphate + 2 H(+). It participates in purine metabolism; GMP biosynthesis; GMP from XMP (L-Gln route): step 1/1. Its function is as follows. Catalyzes the synthesis of GMP from XMP. In Campylobacter fetus subsp. fetus (strain 82-40), this protein is GMP synthase [glutamine-hydrolyzing].